We begin with the raw amino-acid sequence, 93 residues long: Alpha-defensin 23 (93 aa).

A signal peptide spans 1–19; the sequence is MKTLVLLSALILLAFQVQA. Residues 20 to 58 constitute a propeptide that is removed on maturation; the sequence is DPIQNTDEETKTEEQPGKEDQAVSVSFGDPEGSSLQEES. The segment at 24–54 is disordered; the sequence is NTDEETKTEEQPGKEDQAVSVSFGDPEGSSL. The span at 27–40 shows a compositional bias: basic and acidic residues; that stretch reads EETKTEEQPGKEDQ. Disulfide bonds link C64–C92, C66–C81, and C71–C91.

This sequence belongs to the alpha-defensin family.

It localises to the secreted. Its function is as follows. May have microbicidal activities. In Mus musculus (Mouse), this protein is Alpha-defensin 23 (Defa23).